Here is a 185-residue protein sequence, read N- to C-terminus: Ribosome-recycling factor (185 aa).

The segment covering Thr138–Ser179 has biased composition (basic and acidic residues). The segment at Thr138–Gly185 is disordered.

The protein belongs to the RRF family.

Its subcellular location is the cytoplasm. Responsible for the release of ribosomes from messenger RNA at the termination of protein biosynthesis. May increase the efficiency of translation by recycling ribosomes from one round of translation to another. The polypeptide is Ribosome-recycling factor (Lactobacillus gasseri (strain ATCC 33323 / DSM 20243 / BCRC 14619 / CIP 102991 / JCM 1131 / KCTC 3163 / NCIMB 11718 / NCTC 13722 / AM63)).